Reading from the N-terminus, the 493-residue chain is Transmembrane protein 145 (493 aa).

The helical transmembrane segment at 9–29 threads the bilayer; that stretch reads LRRLLPPLLLLLLSLPPRARA. N-linked (GlcNAc...) asparagine glycosylation occurs at N35. 7 consecutive transmembrane segments (helical) span residues 175–195, 207–227, 241–261, 282–302, 318–338, 349–369, and 381–401; these read VTFLLIFILIFFLSCYFGYLL, MFMAAAGVEVLSLLFFCIYWG, ILAKLLFSSSFLIFLLMLILL, VYMTLYTLTHVVLLIYEAEFF, GLIGLQVAAYVWFCYAVLVSL, VPFFAAYTLWFFAVPVMALIA, and IVNGIQLGIHLYAHGVFLIMT. N444 carries an N-linked (GlcNAc...) asparagine glycan. Positions 464-493 are disordered; the sequence is PATSPLPRAAPDSGLPLFRDLRPPGPLRDL.

It is found in the membrane. This is Transmembrane protein 145 (TMEM145) from Homo sapiens (Human).